The following is a 658-amino-acid chain: DNA mismatch repair protein MutL (658 aa).

A compositionally biased stretch (basic and acidic residues) spans 114–130 (RQEDSSHATQVKAEDGK). The disordered stretch occupies residues 114–137 (RQEDSSHATQVKAEDGKLSSPTAA).

It belongs to the DNA mismatch repair MutL/HexB family.

Its function is as follows. This protein is involved in the repair of mismatches in DNA. It is required for dam-dependent methyl-directed DNA mismatch repair. May act as a 'molecular matchmaker', a protein that promotes the formation of a stable complex between two or more DNA-binding proteins in an ATP-dependent manner without itself being part of a final effector complex. The chain is DNA mismatch repair protein MutL from Neisseria meningitidis serogroup C / serotype 2a (strain ATCC 700532 / DSM 15464 / FAM18).